The chain runs to 617 residues: Serine/threonine-protein phosphatase 2A activator 1 (617 aa).

Over residues 1–11 (MDPTSKRPPPA) the composition is skewed to pro residues. 5 disordered regions span residues 1–25 (MDPT…PKLE), 84–169 (VSTS…ESES), 230–261 (GAGG…TNEQ), 376–398 (SSPN…SDIT), and 572–617 (RFTP…PWTK). Positions 84 to 93 (VSTSEPTTDG) are enriched in polar residues. Low complexity predominate over residues 94–104 (QQQQQQQQQRQ). Residues 239 to 252 (EEGTETETETETEG) are compositionally biased toward acidic residues.

It belongs to the PTPA-type PPIase family.

The protein resides in the cytoplasm. It localises to the nucleus. The catalysed reaction is [protein]-peptidylproline (omega=180) = [protein]-peptidylproline (omega=0). In terms of biological role, PPIases accelerate the folding of proteins. It catalyzes the cis-trans isomerization of proline imidic peptide bonds in oligopeptides. Acts as a regulatory subunit for PP2A-like phosphatases modulating their activity or substrate specificity, probably by inducing a conformational change in the catalytic subunit, a direct target of the PPIase. Can reactivate inactive phosphatase PP2A-phosphatase methylesterase complexes (PP2Ai) in presence of ATP and Mg(2+) by dissociating the inactive form from the complex. This Neurospora crassa (strain ATCC 24698 / 74-OR23-1A / CBS 708.71 / DSM 1257 / FGSC 987) protein is Serine/threonine-protein phosphatase 2A activator 1 (rrd-1).